The chain runs to 509 residues: Bifunctional pantoate ligase/cytidylate kinase (509 aa).

Residues 1–275 (MKKLIIRKTE…CGETRLIDHV (275 aa)) form a pantoate--beta-alanine ligase region. 29 to 36 (MGNLHDGH) provides a ligand contact to ATP. The active-site Proton donor is H36. Q61 is a binding site for (R)-pantoate. Q61 contacts beta-alanine. 149 to 152 (GEKD) contacts ATP. Q155 is a (R)-pantoate binding site. 186–189 (LSSR) is an ATP binding site. The interval 276–509 (FLMKRRPIIA…DKIPKESEIK (234 aa)) is cytidylate kinase.

It in the N-terminal section; belongs to the pantothenate synthetase family. The protein in the C-terminal section; belongs to the cytidylate kinase family. Type 1 subfamily.

Its subcellular location is the cytoplasm. It catalyses the reaction (R)-pantoate + beta-alanine + ATP = (R)-pantothenate + AMP + diphosphate + H(+). It carries out the reaction CMP + ATP = CDP + ADP. The enzyme catalyses dCMP + ATP = dCDP + ADP. The protein operates within cofactor biosynthesis; (R)-pantothenate biosynthesis; (R)-pantothenate from (R)-pantoate and beta-alanine: step 1/1. Its function is as follows. Catalyzes the condensation of pantoate with beta-alanine in an ATP-dependent reaction via a pantoyl-adenylate intermediate. Functionally, catalyzes the transfer of a phosphate group from ATP to either CMP or dCMP to form CDP or dCDP and ADP, respectively. This is Bifunctional pantoate ligase/cytidylate kinase from Prochlorococcus marinus (strain AS9601).